A 444-amino-acid chain; its full sequence is uncharacterized protein (444 aa).

This is an uncharacterized protein from Saccharomyces cerevisiae (strain ATCC 204508 / S288c) (Baker's yeast).